Reading from the N-terminus, the 1238-residue chain is Inner capsid protein VP2 (1238 aa).

The segment at 1-35 is disordered; sequence MSTSAKKTPESKTEDKIEPVIEQTSNDKPEPPPNK. Over residues 7 to 30 the composition is skewed to basic and acidic residues; the sequence is KTPESKTEDKIEPVIEQTSNDKPE.

It belongs to the turreted BTV-fold inner capsid family. Homodecamer; each decamer is made up of two conformers of VP2, called VP2A and VP2B. 12 homodecamers assemble to form an icosahedral capsid.

Its subcellular location is the virion. Its function is as follows. Inner capsid protein that self-assembles to form an icosahedral capsid with a T=2 symmetry, which consists of 120 copies of VP2, with channels at each of its five-fold vertices. This capsid constitutes the innermost concentric layer of the viral mature particle. The chain is Inner capsid protein VP2 (S2) from Cryphonectria parasitica (Chestnut blight fungus).